The chain runs to 638 residues: Threonine--tRNA ligase (638 aa).

One can recognise a TGS domain in the interval 1 to 61 (MPNIKLPDGS…ERDSELAILT (61 aa)). Positions 242 to 533 (DHRKLGRQLD…LIEHYAGAMP (292 aa)) are catalytic. Cysteine 333, histidine 384, and histidine 510 together coordinate Zn(2+).

Belongs to the class-II aminoacyl-tRNA synthetase family. Homodimer. Requires Zn(2+) as cofactor.

Its subcellular location is the cytoplasm. The catalysed reaction is tRNA(Thr) + L-threonine + ATP = L-threonyl-tRNA(Thr) + AMP + diphosphate + H(+). Its function is as follows. Catalyzes the attachment of threonine to tRNA(Thr) in a two-step reaction: L-threonine is first activated by ATP to form Thr-AMP and then transferred to the acceptor end of tRNA(Thr). Also edits incorrectly charged L-seryl-tRNA(Thr). The protein is Threonine--tRNA ligase of Azoarcus sp. (strain BH72).